The sequence spans 157 residues: Lipoprotein signal peptidase (157 aa).

4 helical membrane-spanning segments follow: residues 10-30, 36-56, 58-78, and 84-104; these read FIFIGVFLLIFGTDQAIKYAI, YESSIIDIVLVFNKGVAFSLL, FLEGSLKYLQILLILGLFIFL, and LFKAHTIEFGMVFGAGVSNIL. Active-site residues include Asp114 and Asp131. A helical membrane pass occupies residues 123 to 143; sequence DFAIFNFADVMIDVGVGVLLI.

It belongs to the peptidase A8 family.

It is found in the cell inner membrane. The enzyme catalyses Release of signal peptides from bacterial membrane prolipoproteins. Hydrolyzes -Xaa-Yaa-Zaa-|-(S,diacylglyceryl)Cys-, in which Xaa is hydrophobic (preferably Leu), and Yaa (Ala or Ser) and Zaa (Gly or Ala) have small, neutral side chains.. It participates in protein modification; lipoprotein biosynthesis (signal peptide cleavage). This protein specifically catalyzes the removal of signal peptides from prolipoproteins. The polypeptide is Lipoprotein signal peptidase (Helicobacter acinonychis (strain Sheeba)).